The following is a 147-amino-acid chain: Lysozyme C (147 aa).

An N-terminal signal peptide occupies residues 1-18 (MKVLLLLGFIFCSMAAHG). The C-type lysozyme domain maps to 19–147 (KRMERCEFAR…LSKYLEGCHL (129 aa)). Cystine bridges form between Cys24–Cys145, Cys48–Cys133, Cys83–Cys99, and Cys95–Cys113. Residues Glu53 and Asp71 contribute to the active site.

Belongs to the glycosyl hydrolase 22 family. In terms of assembly, monomer.

Its subcellular location is the secreted. It catalyses the reaction Hydrolysis of (1-&gt;4)-beta-linkages between N-acetylmuramic acid and N-acetyl-D-glucosamine residues in a peptidoglycan and between N-acetyl-D-glucosamine residues in chitodextrins.. In terms of biological role, lysozymes have primarily a bacteriolytic function; those in tissues and body fluids are associated with the monocyte-macrophage system and enhance the activity of immunoagents. This chain is Lysozyme C (LYZ), found in Trichosurus vulpecula (Brush-tailed possum).